A 255-amino-acid polypeptide reads, in one-letter code: MNKFLILDGMNLVRRIHAAQPNEADISGLKERVHGACKKLLKFHQPSHVAIVWDGNAISWRKALYEDYKKGRKPMPEALSNGLGDIKSYLAEHHIASLEADSEADDVIATLATKLVSIGGEAIIVSTDKGFCQLKHPNIKQWDHFNQTYMTVEAMEQKLGVEHKQFIDYLALAGDSGNKIPGVPGIGPKSAVELLKIFRSLANIYSSIEQVGSKQAKKLEAGKHLARLSYKLVQLQLDMPLNANLKQFRLPKANS.

D105 serves as a coordination point for Mg(2+). One can recognise a 5'-3' exonuclease domain in the interval 162–254 (EHKQFIDYLA…LKQFRLPKAN (93 aa)). K(+) contacts are provided by L172, A173, P181, V183, and I186. The interaction with DNA stretch occupies residues 185-190 (GIGPKS).

It belongs to the Xni family. Requires Mg(2+) as cofactor. It depends on K(+) as a cofactor.

Has flap endonuclease activity. During DNA replication, flap endonucleases cleave the 5'-overhanging flap structure that is generated by displacement synthesis when DNA polymerase encounters the 5'-end of a downstream Okazaki fragment. This Shewanella piezotolerans (strain WP3 / JCM 13877) protein is Flap endonuclease Xni.